The following is a 345-amino-acid chain: S-adenosylmethionine:tRNA ribosyltransferase-isomerase (345 aa).

The protein belongs to the QueA family. Monomer.

The protein resides in the cytoplasm. It catalyses the reaction 7-aminomethyl-7-carbaguanosine(34) in tRNA + S-adenosyl-L-methionine = epoxyqueuosine(34) in tRNA + adenine + L-methionine + 2 H(+). It functions in the pathway tRNA modification; tRNA-queuosine biosynthesis. In terms of biological role, transfers and isomerizes the ribose moiety from AdoMet to the 7-aminomethyl group of 7-deazaguanine (preQ1-tRNA) to give epoxyqueuosine (oQ-tRNA). This chain is S-adenosylmethionine:tRNA ribosyltransferase-isomerase, found in Anaeromyxobacter dehalogenans (strain 2CP-C).